Reading from the N-terminus, the 521-residue chain is CDP-diacylglycerol--glycerol-3-phosphate 3-phosphatidyltransferase (521 aa).

91-98 (ASLYLGKS) contributes to the ATP binding site. PLD phosphodiesterase domains lie at 177–203 (GLGLQHMKIYGFDNEIILSGANLSNDY) and 419–457 (NGWSYHAKGIWISSRDNNDSDSWKPFITVIGSSNYTRRA). Residues H182, K184, and D189 contribute to the active site.

The protein belongs to the CDP-alcohol phosphatidyltransferase class-II family.

The protein resides in the mitochondrion. The catalysed reaction is a CDP-1,2-diacyl-sn-glycerol + sn-glycerol 3-phosphate = a 1,2-diacyl-sn-glycero-3-phospho-(1'-sn-glycero-3'-phosphate) + CMP + H(+). The protein operates within phospholipid metabolism; phosphatidylglycerol biosynthesis; phosphatidylglycerol from CDP-diacylglycerol: step 1/2. Its function is as follows. Essential for the viability of mitochondrial petite mutant. Catalyzes the committed step to the synthesis of the acidic phospholipids. The sequence is that of CDP-diacylglycerol--glycerol-3-phosphate 3-phosphatidyltransferase (PGS1) from Saccharomyces pastorianus (Lager yeast).